We begin with the raw amino-acid sequence, 434 residues long: 3-phosphoshikimate 1-carboxyvinyltransferase (434 aa).

3-phosphoshikimate is bound by residues lysine 22, serine 23, and arginine 27. Lysine 22 is a phosphoenolpyruvate binding site. Glycine 93 and arginine 121 together coordinate phosphoenolpyruvate. Residues serine 168, serine 169, glutamine 170, serine 199, aspartate 320, and lysine 347 each contribute to the 3-phosphoshikimate site. Residue glutamine 170 participates in phosphoenolpyruvate binding. The Proton acceptor role is filled by aspartate 320. Phosphoenolpyruvate-binding residues include arginine 351, arginine 394, and lysine 419.

It belongs to the EPSP synthase family. As to quaternary structure, monomer.

It localises to the cytoplasm. It catalyses the reaction 3-phosphoshikimate + phosphoenolpyruvate = 5-O-(1-carboxyvinyl)-3-phosphoshikimate + phosphate. The protein operates within metabolic intermediate biosynthesis; chorismate biosynthesis; chorismate from D-erythrose 4-phosphate and phosphoenolpyruvate: step 6/7. Its function is as follows. Catalyzes the transfer of the enolpyruvyl moiety of phosphoenolpyruvate (PEP) to the 5-hydroxyl of shikimate-3-phosphate (S3P) to produce enolpyruvyl shikimate-3-phosphate and inorganic phosphate. This chain is 3-phosphoshikimate 1-carboxyvinyltransferase, found in Burkholderia cenocepacia (strain ATCC BAA-245 / DSM 16553 / LMG 16656 / NCTC 13227 / J2315 / CF5610) (Burkholderia cepacia (strain J2315)).